The sequence spans 273 residues: Putative pyruvate, phosphate dikinase regulatory protein (273 aa).

Gly153–Thr160 serves as a coordination point for ADP.

Belongs to the pyruvate, phosphate/water dikinase regulatory protein family. PDRP subfamily.

The enzyme catalyses N(tele)-phospho-L-histidyl/L-threonyl-[pyruvate, phosphate dikinase] + ADP = N(tele)-phospho-L-histidyl/O-phospho-L-threonyl-[pyruvate, phosphate dikinase] + AMP + H(+). It carries out the reaction N(tele)-phospho-L-histidyl/O-phospho-L-threonyl-[pyruvate, phosphate dikinase] + phosphate + H(+) = N(tele)-phospho-L-histidyl/L-threonyl-[pyruvate, phosphate dikinase] + diphosphate. Bifunctional serine/threonine kinase and phosphorylase involved in the regulation of the pyruvate, phosphate dikinase (PPDK) by catalyzing its phosphorylation/dephosphorylation. The sequence is that of Putative pyruvate, phosphate dikinase regulatory protein from Sinorhizobium medicae (strain WSM419) (Ensifer medicae).